A 704-amino-acid polypeptide reads, in one-letter code: MARQVALDRVRNIGIMAHIDAGKTTTTERILYYTGRLHKMGEVHEGGATMDWMEQEKERGITITSAATTCFWTPKYGNYAGLNHRINIIDTPGHVDFTVEVERSLRVLDGAVALFCAVGGVEPQSETVWRQANKYGVPRIAYVNKMDRVGANFFETVKAIRERLGANPVPIQIPIGQGEVFAGFVDLIRMKGIIYDKEDGSTYTEVEIPHDLENEARTWRINMLEAVSELDETLLEKYLNGEDITEEEIRTVLRQATLGVTIVPVLCGSSFKNKGVQFMLDAVIDYLASPVDDGEVEGHDPKTEEPIVRQPKDEEPFAALAFKIATDPFVGKLTFFRVYSGVLNAGSYVLNSTTGKKERVGRVLQMHSNKREERDAVYAGDIAAAVGLKDVRTGDTLCDESKPIVLEKMVFPEPVIEIAVEPKTKADNDKLGMSLAKLAEEDPTFRVKTDEETGQTLIAGMGELHLEILVDRLKREFKVEANVGQPQVAYRETIRGTVEYEGKFVRQSGGKGQFGLVVLRVEPLEEGKGYEFVDEIKGGVIPKEYIPAVNAGIQEAMKDGVVAGFPMQDIKVTLIDGKYHEVDSSEMAFKIAGSIGFKGAAKKANPVLLEPIMKVEVITPEEYLGDVMGDLSGRRGHIEGMGQRAGAQFVSAKVPLSQMFGYSTDLRSMTQGRANYSMEFESYREVPRNIAEALQEKRVGKDSE.

The 284-residue stretch at 8–291 (DRVRNIGIMA…AVIDYLASPV (284 aa)) folds into the tr-type G domain. GTP-binding positions include 17–24 (AHIDAGKT), 90–94 (DTPGH), and 144–147 (NKMD).

The protein belongs to the TRAFAC class translation factor GTPase superfamily. Classic translation factor GTPase family. EF-G/EF-2 subfamily.

It is found in the cytoplasm. Functionally, catalyzes the GTP-dependent ribosomal translocation step during translation elongation. During this step, the ribosome changes from the pre-translocational (PRE) to the post-translocational (POST) state as the newly formed A-site-bound peptidyl-tRNA and P-site-bound deacylated tRNA move to the P and E sites, respectively. Catalyzes the coordinated movement of the two tRNA molecules, the mRNA and conformational changes in the ribosome. This chain is Elongation factor G, found in Chlorobaculum tepidum (strain ATCC 49652 / DSM 12025 / NBRC 103806 / TLS) (Chlorobium tepidum).